We begin with the raw amino-acid sequence, 289 residues long: Phosphatidylserine decarboxylase proenzyme (289 aa).

Active-site charge relay system; for autoendoproteolytic cleavage activity residues include aspartate 89, histidine 146, and serine 252. Catalysis depends on serine 252, which acts as the Schiff-base intermediate with substrate; via pyruvic acid; for decarboxylase activity. The residue at position 252 (serine 252) is a Pyruvic acid (Ser); by autocatalysis.

The protein belongs to the phosphatidylserine decarboxylase family. PSD-B subfamily. Prokaryotic type I sub-subfamily. As to quaternary structure, heterodimer of a large membrane-associated beta subunit and a small pyruvoyl-containing alpha subunit. Pyruvate serves as cofactor. Is synthesized initially as an inactive proenzyme. Formation of the active enzyme involves a self-maturation process in which the active site pyruvoyl group is generated from an internal serine residue via an autocatalytic post-translational modification. Two non-identical subunits are generated from the proenzyme in this reaction, and the pyruvate is formed at the N-terminus of the alpha chain, which is derived from the carboxyl end of the proenzyme. The autoendoproteolytic cleavage occurs by a canonical serine protease mechanism, in which the side chain hydroxyl group of the serine supplies its oxygen atom to form the C-terminus of the beta chain, while the remainder of the serine residue undergoes an oxidative deamination to produce ammonia and the pyruvoyl prosthetic group on the alpha chain. During this reaction, the Ser that is part of the protease active site of the proenzyme becomes the pyruvoyl prosthetic group, which constitutes an essential element of the active site of the mature decarboxylase.

It localises to the cell membrane. It catalyses the reaction a 1,2-diacyl-sn-glycero-3-phospho-L-serine + H(+) = a 1,2-diacyl-sn-glycero-3-phosphoethanolamine + CO2. It participates in phospholipid metabolism; phosphatidylethanolamine biosynthesis; phosphatidylethanolamine from CDP-diacylglycerol: step 2/2. In terms of biological role, catalyzes the formation of phosphatidylethanolamine (PtdEtn) from phosphatidylserine (PtdSer). This Shewanella sp. (strain W3-18-1) protein is Phosphatidylserine decarboxylase proenzyme.